A 122-amino-acid chain; its full sequence is MIQQESRLKVADNSGAREILVIKILGGSRVKTGNIGDIIVATVKQATPGGVVKKGDVVKAVVVRTKHGLHRKDGSYIKFDENAAVLINNDKSPKGTRIFGPIARELRDDDYMKIISLAPEVL.

This sequence belongs to the universal ribosomal protein uL14 family. In terms of assembly, part of the 50S ribosomal subunit. Forms a cluster with proteins L3 and L19. In the 70S ribosome, L14 and L19 interact and together make contacts with the 16S rRNA in bridges B5 and B8.

Its function is as follows. Binds to 23S rRNA. Forms part of two intersubunit bridges in the 70S ribosome. The protein is Large ribosomal subunit protein uL14 of Limosilactobacillus fermentum (strain NBRC 3956 / LMG 18251) (Lactobacillus fermentum).